A 768-amino-acid chain; its full sequence is Lon protease (768 aa).

A Lon N-terminal domain is found at 4–198 (APFLPIRDLV…RILDEIVAEM (195 aa)). Residue 349 to 356 (GPPGIGKT) participates in ATP binding. One can recognise a Lon proteolytic domain in the interval 586–768 (TGKIGVVNGL…DDVSKLVFVK (183 aa)). Residues Ser-674 and Lys-717 contribute to the active site.

Belongs to the peptidase S16 family. Homohexamer. Organized in a ring with a central cavity.

It is found in the cytoplasm. It catalyses the reaction Hydrolysis of proteins in presence of ATP.. Functionally, ATP-dependent serine protease that mediates the selective degradation of mutant and abnormal proteins as well as certain short-lived regulatory proteins. Required for cellular homeostasis and for survival from DNA damage and developmental changes induced by stress. Degrades polypeptides processively to yield small peptide fragments that are 5 to 10 amino acids long. Binds to DNA in a double-stranded, site-specific manner. This is Lon protease from Fusobacterium nucleatum subsp. nucleatum (strain ATCC 25586 / DSM 15643 / BCRC 10681 / CIP 101130 / JCM 8532 / KCTC 2640 / LMG 13131 / VPI 4355).